Consider the following 757-residue polypeptide: Xaa-Pro dipeptidyl-peptidase (757 aa).

Catalysis depends on charge relay system residues Ser348, Asp468, and His498.

It belongs to the peptidase S15 family. Homodimer.

It localises to the cytoplasm. The catalysed reaction is Hydrolyzes Xaa-Pro-|- bonds to release unblocked, N-terminal dipeptides from substrates including Ala-Pro-|-p-nitroanilide and (sequentially) Tyr-Pro-|-Phe-Pro-|-Gly-Pro-|-Ile.. In terms of biological role, removes N-terminal dipeptides sequentially from polypeptides having unsubstituted N-termini provided that the penultimate residue is proline. The polypeptide is Xaa-Pro dipeptidyl-peptidase (Streptococcus pneumoniae (strain P1031)).